The chain runs to 151 residues: 3-dehydroquinate dehydratase (151 aa).

Y24 (proton acceptor) is an active-site residue. Positions 76, 82, and 89 each coordinate substrate. H102 functions as the Proton donor in the catalytic mechanism. Substrate-binding positions include 103–104 (VS) and R113.

This sequence belongs to the type-II 3-dehydroquinase family. As to quaternary structure, homododecamer.

The enzyme catalyses 3-dehydroquinate = 3-dehydroshikimate + H2O. It participates in metabolic intermediate biosynthesis; chorismate biosynthesis; chorismate from D-erythrose 4-phosphate and phosphoenolpyruvate: step 3/7. Functionally, catalyzes a trans-dehydration via an enolate intermediate. The chain is 3-dehydroquinate dehydratase from Rhodopseudomonas palustris (strain BisA53).